The chain runs to 466 residues: Argininosuccinate lyase (466 aa).

Belongs to the lyase 1 family. Argininosuccinate lyase subfamily.

The protein resides in the cytoplasm. It catalyses the reaction 2-(N(omega)-L-arginino)succinate = fumarate + L-arginine. Its pathway is amino-acid biosynthesis; L-arginine biosynthesis; L-arginine from L-ornithine and carbamoyl phosphate: step 3/3. The polypeptide is Argininosuccinate lyase (Microcystis aeruginosa (strain NIES-843 / IAM M-2473)).